The chain runs to 272 residues: Enoyl-[acyl-carrier-protein] reductase [NADH] 1 (272 aa).

Residues Gly17, 23–24 (SI), Gln44, 68–69 (DV), and Ile96 each bind NAD(+). Active-site proton acceptor residues include Tyr149 and Tyr159. Residues Lys166 and 195-199 (IKTLA) each bind NAD(+).

The protein belongs to the short-chain dehydrogenases/reductases (SDR) family. FabI subfamily.

Its subcellular location is the cell inner membrane. It catalyses the reaction a 2,3-saturated acyl-[ACP] + NAD(+) = a (2E)-enoyl-[ACP] + NADH + H(+). It participates in lipid metabolism; fatty acid biosynthesis. This chain is Enoyl-[acyl-carrier-protein] reductase [NADH] 1 (fabI1), found in Rhizobium meliloti (strain 1021) (Ensifer meliloti).